Here is a 70-residue protein sequence, read N- to C-terminus: DNA-directed RNA polymerase subunit omega (70 aa).

It belongs to the RNA polymerase subunit omega family. The RNAP catalytic core consists of 2 alpha, 1 beta, 1 beta' and 1 omega subunit. When a sigma factor is associated with the core the holoenzyme is formed, which can initiate transcription.

It catalyses the reaction RNA(n) + a ribonucleoside 5'-triphosphate = RNA(n+1) + diphosphate. Promotes RNA polymerase assembly. Latches the N- and C-terminal regions of the beta' subunit thereby facilitating its interaction with the beta and alpha subunits. This is DNA-directed RNA polymerase subunit omega from Bacillus anthracis.